Reading from the N-terminus, the 316-residue chain is Secondary metabolism regulator LAE1 (316 aa).

This sequence belongs to the methyltransferase superfamily. LaeA methyltransferase family. Component of the heterotrimeric velvet complex composed of LAE1, VEL1 and VEL2; VEL1 acting as a bridging protein between LAE1 and VEL2. Interacts with VEL1.

The protein resides in the nucleus. The enzyme catalyses L-methionyl-[protein] + S-adenosyl-L-methionine = S-methyl-L-methionyl-[protein] + S-adenosyl-L-homocysteine. In terms of biological role, methyltransferase that performs automethylation. No other methyl-accepting substrate has been identified yet. Component of the velvet transcription factor complex that acts as a global regulator for secondary metabolite gene expression. Controls the expression of the gibberellins gene clusters, but does not affect bikaverin production. Controls the expression of the fusaric acid gene cluster. Acts as a virulence factors during infection, most likely through activation of gibberellins biosynthesis. This is Secondary metabolism regulator LAE1 from Gibberella fujikuroi (strain CBS 195.34 / IMI 58289 / NRRL A-6831) (Bakanae and foot rot disease fungus).